The following is a 360-amino-acid chain: Nicotinate-nucleotide--dimethylbenzimidazole phosphoribosyltransferase (360 aa).

The active-site Proton acceptor is glutamate 327.

Belongs to the CobT family.

The enzyme catalyses 5,6-dimethylbenzimidazole + nicotinate beta-D-ribonucleotide = alpha-ribazole 5'-phosphate + nicotinate + H(+). It participates in nucleoside biosynthesis; alpha-ribazole biosynthesis; alpha-ribazole from 5,6-dimethylbenzimidazole: step 1/2. Catalyzes the synthesis of alpha-ribazole-5'-phosphate from nicotinate mononucleotide (NAMN) and 5,6-dimethylbenzimidazole (DMB). The protein is Nicotinate-nucleotide--dimethylbenzimidazole phosphoribosyltransferase of Shewanella baltica (strain OS223).